We begin with the raw amino-acid sequence, 250 residues long: AA9 family lytic polysaccharide monooxygenase AA17 (250 aa).

The N-terminal stretch at 1–21 (MAMSKIVSLTGLLASASLVAG) is a signal peptide. Residues H22 and H107 each contribute to the Cu(2+) site. 2 cysteine pairs are disulfide-bonded: C77-C199 and C118-C122. N-linked (GlcNAc...) asparagine glycosylation occurs at N159. 2 residues coordinate O2: H185 and Q194. Residue Y196 participates in Cu(2+) binding.

The protein belongs to the polysaccharide monooxygenase AA9 family. Cu(2+) is required as a cofactor.

It localises to the secreted. Its function is as follows. Lytic polysaccharide monooxygenase (LPMO) that exhibits oxidative cleavage beta-O-4 linkage of lignin resulting in the formation of aromatic compound guaiacol. Catalysis by LPMOs requires the reduction of the active-site copper from Cu(II) to Cu(I) by a reducing agent and H(2)O(2) or O(2) as a cosubstrate. Does not use cellulose, cello-oligosaccharides, xyloglucan, xylan, chitin nor starch as substrates. Able to depolymerize the lignin dimer guaicyl glycerol beta-guaicyl ether (GGE). This Aspergillus oryzae (strain ATCC 42149 / RIB 40) (Yellow koji mold) protein is AA9 family lytic polysaccharide monooxygenase AA17.